The primary structure comprises 454 residues: Aspartate aminotransferase P2, mitochondrial (454 aa).

The N-terminal 49 residues, 1–49, are a transit peptide targeting the mitochondrion; sequence SSLLSIPSLSLQYNDKLKVGGNSLRFSKEQSNTFSNAKSSCRISMVAAV. L-aspartate-binding residues include Gly-86, Trp-182, and Asn-235. Lys-299 carries the post-translational modification N6-(pyridoxal phosphate)lysine. Arg-428 contacts L-aspartate.

It belongs to the class-I pyridoxal-phosphate-dependent aminotransferase family. Homodimer. Requires pyridoxal 5'-phosphate as cofactor.

Its subcellular location is the mitochondrion matrix. It catalyses the reaction L-aspartate + 2-oxoglutarate = oxaloacetate + L-glutamate. Its function is as follows. Important for the metabolism of amino acids and Krebs-cycle related organic acids. In plants, it is involved in nitrogen metabolism and in aspects of carbon and energy metabolism. The chain is Aspartate aminotransferase P2, mitochondrial from Lupinus angustifolius (Narrow-leaved blue lupine).